We begin with the raw amino-acid sequence, 471 residues long: Ankyrin repeat and death domain-containing protein 1A (471 aa).

ANK repeat units lie at residues 19-48 (VGRV…AVDE), 52-81 (FGMN…KIHC), 85-114 (DGLT…DVAL), 120-149 (LGRT…DHSV), 153-182 (EGNT…DLEE), 186-215 (EGLT…TVNA), 219-248 (KNLS…CTNV), 251-280 (HGAS…DLNA), 284-313 (RQQT…DLNL), and 317-346 (QGKT…FYKW). Residues 379–467 (SVLWRLASRH…DLAELAVASV (89 aa)) form the Death domain.

This Macaca fascicularis (Crab-eating macaque) protein is Ankyrin repeat and death domain-containing protein 1A (ANKDD1A).